A 393-amino-acid polypeptide reads, in one-letter code: Formate-dependent phosphoribosylglycinamide formyltransferase (393 aa).

Residues 22–23 and glutamate 82 contribute to the N(1)-(5-phospho-beta-D-ribosyl)glycinamide site; that span reads EL. ATP-binding positions include arginine 114, lysine 155, 160–165, 195–198, and glutamate 203; these read SSGHGQ and EGFV. In terms of domain architecture, ATP-grasp spans 119–308; that stretch reads RLAAEELGLP…EFALHARAIL (190 aa). Glutamate 267 and glutamate 279 together coordinate Mg(2+). Residues aspartate 286, lysine 356, and 363–364 each bind N(1)-(5-phospho-beta-D-ribosyl)glycinamide; that span reads RR.

The protein belongs to the PurK/PurT family. Homodimer.

It catalyses the reaction N(1)-(5-phospho-beta-D-ribosyl)glycinamide + formate + ATP = N(2)-formyl-N(1)-(5-phospho-beta-D-ribosyl)glycinamide + ADP + phosphate + H(+). Its pathway is purine metabolism; IMP biosynthesis via de novo pathway; N(2)-formyl-N(1)-(5-phospho-D-ribosyl)glycinamide from N(1)-(5-phospho-D-ribosyl)glycinamide (formate route): step 1/1. Involved in the de novo purine biosynthesis. Catalyzes the transfer of formate to 5-phospho-ribosyl-glycinamide (GAR), producing 5-phospho-ribosyl-N-formylglycinamide (FGAR). Formate is provided by PurU via hydrolysis of 10-formyl-tetrahydrofolate. In Pasteurella multocida (strain Pm70), this protein is Formate-dependent phosphoribosylglycinamide formyltransferase.